A 193-amino-acid chain; its full sequence is 7-methyl-GTP pyrophosphatase (193 aa).

Asp70 acts as the Proton acceptor in catalysis.

The protein belongs to the Maf family. YceF subfamily. Requires a divalent metal cation as cofactor.

It localises to the cytoplasm. The enzyme catalyses N(7)-methyl-GTP + H2O = N(7)-methyl-GMP + diphosphate + H(+). In terms of biological role, nucleoside triphosphate pyrophosphatase that hydrolyzes 7-methyl-GTP (m(7)GTP). May have a dual role in cell division arrest and in preventing the incorporation of modified nucleotides into cellular nucleic acids. This chain is 7-methyl-GTP pyrophosphatase, found in Vibrio parahaemolyticus serotype O3:K6 (strain RIMD 2210633).